Here is a 553-residue protein sequence, read N- to C-terminus: Arginine--tRNA ligase (553 aa).

The 'HIGH' region motif lies at 130–140 (ANPTGDLHIGH).

Belongs to the class-I aminoacyl-tRNA synthetase family. As to quaternary structure, monomer.

The protein localises to the cytoplasm. The catalysed reaction is tRNA(Arg) + L-arginine + ATP = L-arginyl-tRNA(Arg) + AMP + diphosphate. This is Arginine--tRNA ligase from Staphylococcus epidermidis (strain ATCC 35984 / DSM 28319 / BCRC 17069 / CCUG 31568 / BM 3577 / RP62A).